Reading from the N-terminus, the 493-residue chain is Probable phospho-2-dehydro-3-deoxyheptonate aldolase, chloroplastic (493 aa).

A chloroplast-targeting transit peptide spans 1–58 (MAMSNTSALASKLLPSCKPHQPTLTFFSPSTTCQKKPRSSRPISAAVHVTQPPKTPIS).

It belongs to the class-II DAHP synthase family.

The protein localises to the plastid. It is found in the chloroplast. The enzyme catalyses D-erythrose 4-phosphate + phosphoenolpyruvate + H2O = 7-phospho-2-dehydro-3-deoxy-D-arabino-heptonate + phosphate. It participates in metabolic intermediate biosynthesis; chorismate biosynthesis; chorismate from D-erythrose 4-phosphate and phosphoenolpyruvate: step 1/7. The sequence is that of Probable phospho-2-dehydro-3-deoxyheptonate aldolase, chloroplastic (DHS1) from Catharanthus roseus (Madagascar periwinkle).